We begin with the raw amino-acid sequence, 266 residues long: Energy-coupling factor transporter transmembrane protein EcfT (266 aa).

5 helical membrane-spanning segments follow: residues isoleucine 32–valine 52, proline 71–glycine 91, leucine 107–leucine 127, valine 152–methionine 172, and aspartate 246–tryptophan 266.

The protein belongs to the energy-coupling factor EcfT family. As to quaternary structure, forms a stable energy-coupling factor (ECF) transporter complex composed of 2 membrane-embedded substrate-binding proteins (S component), 2 ATP-binding proteins (A component) and 2 transmembrane proteins (T component). May be able to interact with more than 1 S component at a time.

The protein localises to the cell membrane. Its function is as follows. Transmembrane (T) component of an energy-coupling factor (ECF) ABC-transporter complex. Unlike classic ABC transporters this ECF transporter provides the energy necessary to transport a number of different substrates. This chain is Energy-coupling factor transporter transmembrane protein EcfT, found in Levilactobacillus brevis (strain ATCC 367 / BCRC 12310 / CIP 105137 / JCM 1170 / LMG 11437 / NCIMB 947 / NCTC 947) (Lactobacillus brevis).